A 297-amino-acid chain; its full sequence is Acetyl-coenzyme A carboxylase carboxyl transferase subunit beta (297 aa).

Residues 1 to 23 (MSWIERILGRTSSSSSSSKSKVP) form a disordered region. Positions 26-295 (VWTKCTSCEQ…PFKTAELIVE (270 aa)) constitute a CoA carboxyltransferase N-terminal domain. Zn(2+) is bound by residues cysteine 30, cysteine 33, cysteine 49, and cysteine 52. The segment at 30-52 (CTSCEQVLYSEELKRNMHVCPKC) adopts a C4-type zinc-finger fold.

This sequence belongs to the AccD/PCCB family. As to quaternary structure, acetyl-CoA carboxylase is a heterohexamer composed of biotin carboxyl carrier protein (AccB), biotin carboxylase (AccC) and two subunits each of ACCase subunit alpha (AccA) and ACCase subunit beta (AccD). The cofactor is Zn(2+).

Its subcellular location is the cytoplasm. It catalyses the reaction N(6)-carboxybiotinyl-L-lysyl-[protein] + acetyl-CoA = N(6)-biotinyl-L-lysyl-[protein] + malonyl-CoA. It participates in lipid metabolism; malonyl-CoA biosynthesis; malonyl-CoA from acetyl-CoA: step 1/1. Functionally, component of the acetyl coenzyme A carboxylase (ACC) complex. Biotin carboxylase (BC) catalyzes the carboxylation of biotin on its carrier protein (BCCP) and then the CO(2) group is transferred by the transcarboxylase to acetyl-CoA to form malonyl-CoA. This Actinobacillus pleuropneumoniae serotype 3 (strain JL03) protein is Acetyl-coenzyme A carboxylase carboxyl transferase subunit beta.